A 465-amino-acid chain; its full sequence is Ribulose bisphosphate carboxylase large chain (465 aa).

At Lys4 the chain carries N6,N6,N6-trimethyllysine. Substrate-binding residues include Asn113 and Thr163. Lys165 serves as the catalytic Proton acceptor. Lys167 serves as a coordination point for substrate. 3 residues coordinate Mg(2+): Lys191, Asp193, and Glu194. Lys191 carries the N6-carboxylysine modification. The active-site Proton acceptor is His284. Residues Arg285, His317, and Ser369 each contribute to the substrate site.

This sequence belongs to the RuBisCO large chain family. Type I subfamily. Heterohexadecamer of 8 large chains and 8 small chains; disulfide-linked. The disulfide link is formed within the large subunit homodimers. The cofactor is Mg(2+). Post-translationally, the disulfide bond which can form in the large chain dimeric partners within the hexadecamer appears to be associated with oxidative stress and protein turnover.

Its subcellular location is the plastid. It localises to the chloroplast. It catalyses the reaction 2 (2R)-3-phosphoglycerate + 2 H(+) = D-ribulose 1,5-bisphosphate + CO2 + H2O. The enzyme catalyses D-ribulose 1,5-bisphosphate + O2 = 2-phosphoglycolate + (2R)-3-phosphoglycerate + 2 H(+). Its function is as follows. RuBisCO catalyzes two reactions: the carboxylation of D-ribulose 1,5-bisphosphate, the primary event in carbon dioxide fixation, as well as the oxidative fragmentation of the pentose substrate in the photorespiration process. Both reactions occur simultaneously and in competition at the same active site. In Manilkara zapota (Sapodilla plum), this protein is Ribulose bisphosphate carboxylase large chain.